A 241-amino-acid polypeptide reads, in one-letter code: Tetrahydromethanopterin S-methyltransferase subunit A (241 aa).

At 1 to 220 (MAEKKEPAEG…HSGVLAGKIE (220 aa)) the chain is on the cytoplasmic side. Histidine 85 is a 5-hydroxybenzimidazolylcob(I)amide binding site. Residues 221 to 241 (GIMVGLVLSLFVLGLLLFGGM) form a helical membrane-spanning segment.

The protein belongs to the MtrA family. As to quaternary structure, the complex is composed of 8 subunits; MtrA, MtrB, MtrC, MtrD, MtrE, MtrF, MtrG and MtrH. 5-hydroxybenzimidazolylcob(I)amide is required as a cofactor.

Its subcellular location is the cell membrane. It carries out the reaction 5-methyl-5,6,7,8-tetrahydromethanopterin + coenzyme M + 2 Na(+)(in) = 5,6,7,8-tetrahydromethanopterin + methyl-coenzyme M + 2 Na(+)(out). It participates in one-carbon metabolism; methanogenesis from CO(2); methyl-coenzyme M from 5,10-methylene-5,6,7,8-tetrahydromethanopterin: step 2/2. Part of a complex that catalyzes the formation of methyl-coenzyme M and tetrahydromethanopterin from coenzyme M and methyl-tetrahydromethanopterin. This is an energy-conserving, sodium-ion translocating step. This Methanohalobium evestigatum (strain ATCC BAA-1072 / DSM 3721 / NBRC 107634 / OCM 161 / Z-7303) protein is Tetrahydromethanopterin S-methyltransferase subunit A.